A 118-amino-acid chain; its full sequence is MTDLIPLEQAHCLPRKGSDHKLGEARLAELLPQVPGWELAEAGMALTRTFRFADYYHTLAFVNALAWIAHREDHHPDLGVHYDRVVVRYSTHDVGGLSENDFICAAKTARLYDQGITA.

It belongs to the pterin-4-alpha-carbinolamine dehydratase family.

The enzyme catalyses (4aS,6R)-4a-hydroxy-L-erythro-5,6,7,8-tetrahydrobiopterin = (6R)-L-erythro-6,7-dihydrobiopterin + H2O. The sequence is that of Putative pterin-4-alpha-carbinolamine dehydratase from Xanthomonas oryzae pv. oryzae (strain MAFF 311018).